Here is a 334-residue protein sequence, read N- to C-terminus: Protein NlpD/LppB homolog (334 aa).

Residues 89–133 form the LysM domain; sequence IFYIVKSKDTMYSIAKNSGYNYHELSKFNSIKKPYKIIIGQKIWM.

This sequence belongs to the E.coli NlpD/Haemophilus LppB family.

The chain is Protein NlpD/LppB homolog from Buchnera aphidicola subsp. Acyrthosiphon pisum (strain APS) (Acyrthosiphon pisum symbiotic bacterium).